The sequence spans 98 residues: Large ribosomal subunit protein uL23 (98 aa).

It belongs to the universal ribosomal protein uL23 family. In terms of assembly, part of the 50S ribosomal subunit. Contacts protein L29, and trigger factor when it is bound to the ribosome.

One of the early assembly proteins it binds 23S rRNA. One of the proteins that surrounds the polypeptide exit tunnel on the outside of the ribosome. Forms the main docking site for trigger factor binding to the ribosome. In Clostridium botulinum (strain Eklund 17B / Type B), this protein is Large ribosomal subunit protein uL23.